The following is a 739-amino-acid chain: Phosphoribosylformylglycinamidine synthase subunit PurL (739 aa).

Residue His-53 is part of the active site. Positions 56 and 95 each coordinate ATP. Mg(2+) is bound at residue Glu-97. Residues 98–101 and Arg-120 each bind substrate; that span reads SHNH. His-99 functions as the Proton acceptor in the catalytic mechanism. Asp-121 contributes to the Mg(2+) binding site. Gln-244 serves as a coordination point for substrate. Asp-274 is a Mg(2+) binding site. 318-320 is a substrate binding site; the sequence is ESQ. Positions 501 and 538 each coordinate ATP. Asn-539 contacts Mg(2+). Ser-541 is a binding site for substrate.

Belongs to the FGAMS family. In terms of assembly, monomer. Part of the FGAM synthase complex composed of 1 PurL, 1 PurQ and 2 PurS subunits.

The protein localises to the cytoplasm. It carries out the reaction N(2)-formyl-N(1)-(5-phospho-beta-D-ribosyl)glycinamide + L-glutamine + ATP + H2O = 2-formamido-N(1)-(5-O-phospho-beta-D-ribosyl)acetamidine + L-glutamate + ADP + phosphate + H(+). It functions in the pathway purine metabolism; IMP biosynthesis via de novo pathway; 5-amino-1-(5-phospho-D-ribosyl)imidazole from N(2)-formyl-N(1)-(5-phospho-D-ribosyl)glycinamide: step 1/2. In terms of biological role, part of the phosphoribosylformylglycinamidine synthase complex involved in the purines biosynthetic pathway. Catalyzes the ATP-dependent conversion of formylglycinamide ribonucleotide (FGAR) and glutamine to yield formylglycinamidine ribonucleotide (FGAM) and glutamate. The FGAM synthase complex is composed of three subunits. PurQ produces an ammonia molecule by converting glutamine to glutamate. PurL transfers the ammonia molecule to FGAR to form FGAM in an ATP-dependent manner. PurS interacts with PurQ and PurL and is thought to assist in the transfer of the ammonia molecule from PurQ to PurL. The protein is Phosphoribosylformylglycinamidine synthase subunit PurL of Listeria welshimeri serovar 6b (strain ATCC 35897 / DSM 20650 / CCUG 15529 / CIP 8149 / NCTC 11857 / SLCC 5334 / V8).